The following is an 899-amino-acid chain: Translation initiation factor IF-2 (899 aa).

Disordered regions lie at residues 31-227 (KKAE…ATEQ) and 240-310 (VTTS…GFDK). Polar residues-rich tracts occupy residues 36–47 (NVSQTEKQSLLS) and 73–87 (STLSVAGTGGKSKSV). Basic and acidic residues-rich tracts occupy residues 101–173 (SALE…EKAK), 181–219 (AKSETELLQLRREEEAKRKAEEDSQRQLEEARKMAETNE), and 247–261 (RAAEDEQDRKEETTG). The span at 296-308 (PQVNAPTSMQQGF) shows a compositional bias: polar residues. In terms of domain architecture, tr-type G spans 398 to 565 (SRAPVVTIMG…AILLQSEILE (168 aa)). The G1 stretch occupies residues 407–414 (GHVDHGKT). 407 to 414 (GHVDHGKT) is a binding site for GTP. The interval 432–436 (GITQH) is G2. A G3 region spans residues 453–456 (DTPG). Residues 453–457 (DTPGH) and 507–510 (NKID) contribute to the GTP site. The G4 stretch occupies residues 507–510 (NKID). The segment at 543–545 (SAK) is G5.

Belongs to the TRAFAC class translation factor GTPase superfamily. Classic translation factor GTPase family. IF-2 subfamily.

Its subcellular location is the cytoplasm. Functionally, one of the essential components for the initiation of protein synthesis. Protects formylmethionyl-tRNA from spontaneous hydrolysis and promotes its binding to the 30S ribosomal subunits. Also involved in the hydrolysis of GTP during the formation of the 70S ribosomal complex. This is Translation initiation factor IF-2 from Photobacterium profundum (strain SS9).